A 378-amino-acid polypeptide reads, in one-letter code: 1-acyl-sn-glycerol-3-phosphate acyltransferase delta (378 aa).

Residues 11 to 31 form a helical membrane-spanning segment; it reads FLCHLIFCYVFIVSGLIINTI. Positions 96 to 101 match the HXXXXD motif motif; that stretch reads HKFEID. A run of 3 helical transmembrane segments spans residues 125 to 145, 307 to 327, and 338 to 358; these read ELAY…VFCT, TLVN…RFVI, and LASF…MIGV.

This sequence belongs to the 1-acyl-sn-glycerol-3-phosphate acyltransferase family.

The protein localises to the endoplasmic reticulum membrane. The enzyme catalyses a 1-acyl-sn-glycero-3-phosphate + an acyl-CoA = a 1,2-diacyl-sn-glycero-3-phosphate + CoA. It carries out the reaction (4Z,7Z,10Z,13Z,16Z,19Z)-docosahexaenoyl-CoA + 1-hexadecanoyl-sn-glycero-3-phosphate = 1-hexadecanoyl-2-(4Z,7Z,10Z,13Z,16Z,19Z-docosahexaenoyl)-sn-glycero-3-phosphate + CoA. It catalyses the reaction 1-octadecanoyl-sn-glycero-3-phosphate + (9Z,12Z)-octadecadienoyl-CoA = 1-octadecanoyl-2-(9Z,12Z-octadecadienoyl)-sn-glycero-3-phosphate + CoA. The catalysed reaction is 1-octadecanoyl-sn-glycero-3-phosphate + (4Z,7Z,10Z,13Z,16Z,19Z)-docosahexaenoyl-CoA = 1-octadecanoyl-2-(4Z,7Z,10Z,13Z,16Z,19Z-docosahexaenoyl)-sn-glycero-3-phosphate + CoA. The enzyme catalyses (4Z,7Z,10Z,13Z,16Z,19Z)-docosahexaenoyl-CoA + 1-(9Z-octadecenoyl)-sn-glycero-3-phosphate = 1-(9Z-octadecenoyl)-2-(4Z,7Z,10Z,13Z,16Z,19Z-docosahexaenoyl)-sn-glycero-3-phosphate + CoA. It participates in phospholipid metabolism; CDP-diacylglycerol biosynthesis; CDP-diacylglycerol from sn-glycerol 3-phosphate: step 2/3. Converts 1-acyl-sn-glycerol-3-phosphate (lysophosphatidic acid or LPA) into 1,2-diacyl-sn-glycerol-3-phosphate (phosphatidic acid or PA) by incorporating an acyl moiety at the sn-2 position of the glycerol backbone. Exhibits high acyl-CoA specificity for polyunsaturated fatty acyl-CoA, especially docosahexaenoyl-CoA (22:6-CoA, DHA-CoA). In Bos taurus (Bovine), this protein is 1-acyl-sn-glycerol-3-phosphate acyltransferase delta (AGPAT4).